Here is a 221-residue protein sequence, read N- to C-terminus: Urease accessory protein UreG (221 aa).

19–26 (GPVGSGKT) serves as a coordination point for GTP.

The protein belongs to the SIMIBI class G3E GTPase family. UreG subfamily. In terms of assembly, homodimer. UreD, UreF and UreG form a complex that acts as a GTP-hydrolysis-dependent molecular chaperone, activating the urease apoprotein by helping to assemble the nickel containing metallocenter of UreC. The UreE protein probably delivers the nickel.

The protein localises to the cytoplasm. Its function is as follows. Facilitates the functional incorporation of the urease nickel metallocenter. This process requires GTP hydrolysis, probably effectuated by UreG. Expression of the urease operon increases the likelihood of bacterial survival by contributing to acid resistance in vitro and in vivo in BALB/c mice. Y.enterocolitica enters the body via an oral path and must survive the acidic stomach before being able to colonize the intestinal mucosa. The polypeptide is Urease accessory protein UreG (Yersinia enterocolitica).